The primary structure comprises 874 residues: Isopimaradiene synthase, chloroplastic (874 aa).

The span at 1–12 (MALPSSSLSSRI) shows a compositional bias: polar residues. A disordered region spans residues 1-20 (MALPSSSLSSRIPTGPHPLT). Residues 1 to 37 (MALPSSSLSSRIPTGPHPLTHTQCIPHFSTTINAGIS) constitute a chloroplast transit peptide. Positions 407, 409, 626, 630, 770, and 778 each coordinate Mg(2+). Positions 407 to 410 (DIDD) match the DXDD motif motif. A DDXXD motif motif is present at residues 626 to 630 (DDLYD).

The protein belongs to the terpene synthase family. Tpsd subfamily. Requires Mg(2+) as cofactor. Mn(2+) is required as a cofactor.

It localises to the plastid. Its subcellular location is the chloroplast. The catalysed reaction is (+)-copalyl diphosphate = isopimara-8(14),15-diene + diphosphate. It participates in terpene metabolism; oleoresin biosynthesis. Terpene synthase (TPS) involved in the biosynthesis of diterpene natural products included in conifer oleoresin secretions and volatile emissions; these compounds contribute to biotic and abiotic stress defense against herbivores and pathogens. Catalyzes the conversion of (+)-copalyl diphosphate ((+)-CPP) to isopimaradiene. The sequence is that of Isopimaradiene synthase, chloroplastic from Picea sitchensis (Sitka spruce).